Consider the following 271-residue polypeptide: 5'-nucleotidase SurE (271 aa).

A divalent metal cation contacts are provided by D14, D15, S46, and N104.

This sequence belongs to the SurE nucleotidase family. A divalent metal cation serves as cofactor.

The protein localises to the cytoplasm. It carries out the reaction a ribonucleoside 5'-phosphate + H2O = a ribonucleoside + phosphate. In terms of biological role, nucleotidase that shows phosphatase activity on nucleoside 5'-monophosphates. The chain is 5'-nucleotidase SurE from Gloeothece citriformis (strain PCC 7424) (Cyanothece sp. (strain PCC 7424)).